A 188-amino-acid polypeptide reads, in one-letter code: Protein-arginine kinase activator protein (188 aa).

4 short sequence motifs (CXXC metal binding motif) span residues 3-6 (CENC), 29-32 (CQTC), 87-90 (CPSC), and 105-108 (CANC). In terms of domain architecture, UVR spans 145–180 (KRKIEEKNEYLKKLIEIQDFEEAAIVRDEIKALKAE).

Interacts with McsB and CtsR; the CXXC motifs are needed for the binding.

Functionally, activates the phosphorylation activity of the protein-arginine kinase McsB. May function as an important molecule for oxidative tolerance in various types of stress including that of heavy metals. Binds to Cu(2+), Zn(2+), Co(2+) and Cd(2+) via its CXXC metal binding motifs. This chain is Protein-arginine kinase activator protein, found in Staphylococcus aureus (strain NCTC 8325 / PS 47).